A 635-amino-acid chain; its full sequence is BTB/POZ domain and ankyrin repeat-containing protein NPR2 (635 aa).

The 95-residue stretch at Ser-97 to Pro-191 folds into the BTB domain. Residues Ala-138–Arg-152 are compositionally biased toward gly residues. Positions Ala-138–Pro-157 are disordered. The C2HC NPR-type zinc finger occupies Val-194–Pro-208. Cys-197, Cys-202, His-204, and Cys-207 together coordinate Zn(2+). 3 ANK repeats span residues Lys-317–Asp-347, Asn-349–Leu-376, and Arg-380–Gln-409. A salicylic acid-binding core (SBC) region spans residues Glu-439–Pro-576. A salicylate-binding site is contributed by Arg-484.

It belongs to the plant 'ANKYRIN-BTB/POZ' family. 'NPR1-like' subfamily. Interacts with NRR. Interacts with TGAL1 and TGAL11.

It is found in the nucleus. It participates in protein modification; protein ubiquitination. Salicylic acid (SA)-binding substrate-specific adapter of an E3 ubiquitin-protein ligase complex (CUL3-RBX1-BTB) which mediates the ubiquitination and subsequent proteasomal degradation of target proteins. May be involved in regulating basal defense responses against pathogens, and may be involved in crosstalk between SA- and JA-dependent signaling pathways. Does not seem to be involved in defense response against the bacterial blight disease caused by Xanthomonas oryzae pv. oryzae (Xoo). Over-expression of NPR2/NH2 does not confer disease resistance to Xoo. The sequence is that of BTB/POZ domain and ankyrin repeat-containing protein NPR2 from Oryza sativa subsp. japonica (Rice).